We begin with the raw amino-acid sequence, 234 residues long: MYLLPNTTTITKSTMPHPQQPHAILEGLCKEQSLALAPEMVDKLVEYGRLLEEWNNKINLISRKEDAPIIIKHIFHSLLITQHHTFQTGEKVLDLGTGGGLPGIPLAIIAPQATFLLVDATGKKITACQEMIATLKLTNVTARHLRVEELHGETFHTIVSRQVALLNKLCAYGEPLLHEKGKLICLKGGSLEQEIKQSLEASQKHHGFPARVEEHPIDEVSPIFSEKKIVIAYR.

Residues Gly-96, Leu-101, Asp-119 to Thr-121, Val-147 to Glu-148, and Arg-161 each bind S-adenosyl-L-methionine.

Belongs to the methyltransferase superfamily. RNA methyltransferase RsmG family.

Its subcellular location is the cytoplasm. In terms of biological role, specifically methylates the N7 position of a guanine in 16S rRNA. The protein is Ribosomal RNA small subunit methyltransferase G of Chlorobium chlorochromatii (strain CaD3).